A 546-amino-acid chain; its full sequence is Hexose oxidase (546 aa).

The region spanning 40–222 (IGTNIDFVYV…TKYYFKDLPM (183 aa)) is the FAD-binding PCMH-type domain. A cross-link (6-(S-cysteinyl)-8alpha-(pros-histidyl)-FAD (His-Cys)) is located at residues 79 to 138 (HCYEDFVFDECVKAIINVTGLVESGYDDDRGYFVSSGDTNWGSFKTLFRDHGRVLPGGSC). 2 N-linked (GlcNAc...) asparagine glycosylation sites follow: Asn95 and Asn358.

This sequence belongs to the oxygen-dependent FAD-linked oxidoreductase family. In terms of assembly, homodimer. Requires FAD as cofactor. Post-translationally, cleaved into 40 kDa and 29 kDa cleavage products, but the 2 polypeptide chains do not separate and seem to be physically linked together. In terms of processing, the FAD cofactor is bound via a bicovalent 6-S-cysteinyl, 8alpha-N1-histidyl FAD linkage.

The catalysed reaction is beta-D-glucose + O2 = D-glucono-1,5-lactone + H2O2. It catalyses the reaction D-galactose + O2 = D-galactono-1,5-lactone + H2O2. The enzyme catalyses D-maltose + O2 = D-maltobiono-1,5-lactone + H2O2. It carries out the reaction D-cellobiose + O2 = D-cellobiono-1,5-lactone + H2O2. The catalysed reaction is beta-lactose + O2 = lactobiono-1,5-lactone + H2O2. In terms of biological role, catalyzes the selective oxidation of C1 hydroxyl moieties on mono- and disaccharides with concomitant reduction of molecular oxygen to hydrogen peroxide. This results in the formation of the corresponding lactones, which typically undergo spontaneous hydrolysis. Hexose oxidase is able to oxidize a variety of substrates including D-glucose, D-galactose, maltose, cellobiose, and lactose. The protein is Hexose oxidase (HOX) of Chondrus crispus (Carrageen Irish moss).